Reading from the N-terminus, the 86-residue chain is MAHKKAGGSSRNGRDSESKRLGVKRYAGQEVISGNIIIRQRGTQFYPGANVGIGKDHTLFATAEGVVKFERKGPRQVRTVSVVSAA.

Residues 1–22 (MAHKKAGGSSRNGRDSESKRLG) are disordered.

This sequence belongs to the bacterial ribosomal protein bL27 family.

This Acidithiobacillus ferrooxidans (strain ATCC 23270 / DSM 14882 / CIP 104768 / NCIMB 8455) (Ferrobacillus ferrooxidans (strain ATCC 23270)) protein is Large ribosomal subunit protein bL27.